Reading from the N-terminus, the 292-residue chain is Insulin-like growth factor-binding protein 3 (292 aa).

An N-terminal signal peptide occupies residues 1 to 27 (MHPARPALWAAALTALTLLRGPPVARA). The IGFBP N-terminal domain maps to 36–119 (PVVRCEPCDA…LNGRGFCANA (84 aa)). 6 cysteine pairs are disulfide-bonded: C40-C69, C43-C71, C51-C72, C60-C75, C83-C96, and C90-C116. 3 N-linked (GlcNAc...) asparagine glycosylation sites follow: N118, N124, and N137. Disordered regions lie at residues 127-161 (AYLP…THRV) and 191-211 (YESQ…ETEY). Polar residues predominate over residues 129 to 139 (LPSQPSPGNTT). S149 is subject to Phosphoserine. The segment covering 192–203 (ESQSTDTQNFSS) has biased composition (polar residues). N200 carries an N-linked (GlcNAc...) asparagine glycan. At S202 the chain carries Phosphoserine. Residues 211-286 (YGPCRREMED…DTKGKDDVHC (76 aa)) enclose the Thyroglobulin type-1 domain. 3 disulfide bridges follow: C214–C241, C252–C263, and C265–C286.

As to quaternary structure, interacts with XLKD1. Binds IGF2 more than IGF1. Forms a ternary complex of about 140 to 150 kDa with IGF1 or IGF2 and a 85 kDa glycoprotein (ALS). Interacts with humanin; humanin competes with importin KPNB1 for binding to IGFBP3, blocking IGFBP3 nuclear import and IGFBP3-mediated apoptosis. Interacts with TMEM219. Interacts with RXRA; this interaction modulates the transcriptional activity of RXRA. Interacts with LRP1; this interaction mediates cell growth inhibition independent of IGF1. Phosphorylated by FAM20C in the extracellular medium. Phosphorylated by CK2; resulting in decreased nuclear localization.

It localises to the secreted. The protein localises to the nucleus. Multifunctional protein that plays a critical role in regulating the availability of IGFs such as IGF1 and IGF2 to their receptors and thereby regulates IGF-mediated cellular processes including proliferation, differentiation, and apoptosis in a cell-type specific manner. Also exhibits IGF-independent antiproliferative and apoptotic effects mediated by its receptor TMEM219/IGFBP-3R. Inhibits the positive effect of humanin on insulin sensitivity. Promotes testicular germ cell apoptosis. Acts via LRP-1/alpha2M receptor, also known as TGF-beta type V receptor, to mediate cell growth inhibition independent of IGF1. Mechanistically, induces serine-specific dephosphorylation of IRS1 or IRS2 upon ligation to its receptor, leading to the inhibitory cascade. In the nucleus, interacts with transcription factors such as retinoid X receptor-alpha/RXRA to regulate transcriptional signaling and apoptosis. This is Insulin-like growth factor-binding protein 3 (Igfbp3) from Rattus norvegicus (Rat).